Consider the following 934-residue polypeptide: Serine/threonine-protein kinase PknD (934 aa).

One can recognise a Protein kinase domain in the interval 4 to 296 (YELIRLIGRG…ELRKALQPHL (293 aa)). ATP-binding positions include 10-18 (IGRGGMGEV) and Lys-33. Catalysis depends on Asp-138, which acts as the Proton acceptor.

Belongs to the protein kinase superfamily. Ser/Thr protein kinase family. Post-translationally, autophosphorylated on serine and threonine residues.

The catalysed reaction is L-seryl-[protein] + ATP = O-phospho-L-seryl-[protein] + ADP + H(+). It catalyses the reaction L-threonyl-[protein] + ATP = O-phospho-L-threonyl-[protein] + ADP + H(+). Its function is as follows. Together with the serine/threonine kinase Pkn1, may play a role in the specific interactions with host proteins during intracellular growth. The polypeptide is Serine/threonine-protein kinase PknD (Chlamydia muridarum (strain MoPn / Nigg)).